A 332-amino-acid polypeptide reads, in one-letter code: Hdr-like menaquinol oxidoreductase cytochrome b-like subunit (332 aa).

Transmembrane regions (helical) follow at residues 3–23 (GVIF…IGVI), 97–117 (DARW…LVLI), 143–163 (VFIP…FLLW), 177–197 (LPSD…GNVM), and 230–250 (IEPI…YFPF).

As to quaternary structure, consists of five subunits: an integral membrane subunit, a cytochrome b-like subunit, a cytochrome c subunit and two iron-sulfur subunits.

The protein resides in the cell membrane. Functionally, has menaquinol-oxidizing activity. HmeC and HmeD subunits may together mediate electron transfer from menaquinol to an unidentified electron acceptor on the cytoplasmic side of the membrane. This is Hdr-like menaquinol oxidoreductase cytochrome b-like subunit (hmeC) from Archaeoglobus fulgidus (strain ATCC 49558 / DSM 4304 / JCM 9628 / NBRC 100126 / VC-16).